Consider the following 517-residue polypeptide: MTDIKDIQKIIVLDYGSQYNQLIARRIREFGIFSELRSHKVTADEVRAINPIGIVLSGGPSSVYAEDAFDIDKEILDLGIPVLGICYGMQLLTEKLGGKVVPAGQTGNSEYGQSTLHLTENSELFKETPAEQTVLMSHGDAVTEIPEGFQLVGKSSDCPYAAIENVEKKIFGIQFHPEVRHTEYGNAILRNFAFNVCKAKGDWSMDSFIDMEIEKIREQVGNRKVLLGLSGGVDSSVVGVLLQKAIGDQLTCIFVDHGLLRKGEGDQVMEMLGGRFGLNIIRVDASKRFLDLLAGIDDPEKKRKIIGNEFVYVFDDEASKQKGVDFLAQGTLYTDVIESGTETAQTIKSHHNVGGLPEDMQFELIEPLNTLFKDEVRTLGTALGMPDEIVWRQPFPGPGLAIRVMGEITAEKLETVRESDAILREEIAAAGLNRDIWQYFTVNTGVRSVGVMGDGRTYDYTIAIRAITSIDGMTADFARIPWEVLQKISVRIVNEVEHVNRIVYDITSKPPATVEWE.

Residues 9–202 (KIIVLDYGSQ…AFNVCKAKGD (194 aa)) form the Glutamine amidotransferase type-1 domain. Catalysis depends on Cys86, which acts as the Nucleophile. Active-site residues include His176 and Glu178. Residues 203–392 (WSMDSFIDME…LGMPDEIVWR (190 aa)) enclose the GMPS ATP-PPase domain. Residue 230–236 (SGGVDSS) coordinates ATP.

As to quaternary structure, homodimer.

It catalyses the reaction XMP + L-glutamine + ATP + H2O = GMP + L-glutamate + AMP + diphosphate + 2 H(+). The protein operates within purine metabolism; GMP biosynthesis; GMP from XMP (L-Gln route): step 1/1. Its function is as follows. Catalyzes the synthesis of GMP from XMP. The sequence is that of GMP synthase [glutamine-hydrolyzing] from Streptococcus mutans serotype c (strain ATCC 700610 / UA159).